The sequence spans 149 residues: Down syndrome critical region protein 9 (149 aa).

The tract at residues M1–P41 is disordered.

The chain is Down syndrome critical region protein 9 (DSCR9) from Pan troglodytes (Chimpanzee).